A 373-amino-acid polypeptide reads, in one-letter code: Probable jasmonic acid carboxyl methyltransferase 1 (373 aa).

Residue Tyr-18 coordinates S-adenosyl-L-homocysteine. Position 25 (Gln-25) interacts with jasmonate. S-adenosyl-L-homocysteine-binding residues include Cys-59, Asn-64, Asp-96, Leu-97, Ser-135, and Phe-136. 2 residues coordinate jasmonate: His-156 and Trp-157. Mg(2+) contacts are provided by Asn-174, Asp-260, Phe-262, and Asn-263.

It belongs to the methyltransferase superfamily. Type-7 methyltransferase family. Mg(2+) serves as cofactor.

It is found in the cytoplasm. The protein resides in the nucleus. It catalyses the reaction jasmonate + S-adenosyl-L-methionine = methyl (-)-jasmonate + S-adenosyl-L-homocysteine. The protein operates within lipid metabolism; oxylipin biosynthesis. Its function is as follows. Catalyzes the methylation of jasmonate into methyljasmonate, a plant volatile that acts as an important cellular regulator mediating diverse developmental processes and defense responses. The polypeptide is Probable jasmonic acid carboxyl methyltransferase 1 (Theobroma cacao (Cacao)).